The primary structure comprises 398 residues: Ubiquitin-like modifier-activating enzyme 5 (398 aa).

The ATP site is built by G79, D100, K123, N146, and N180. Zn(2+) is bound by residues C222 and C225. Residue C246 is the Glycyl thioester intermediate of the active site. The Zn(2+) site is built by C299 and C304. The UFM1-interacting sequence (UIS) motif lies at 330-342; that stretch reads VVHEDNEWGIELV. Residues 343 to 373 are linker; the sequence is SEVTEAELQDASGPIPDLPEGITVAYTIPEK. A UFC1-binding sequence (UFC) motif is present at residues 383–398; sequence ETEQSLEELMAQMKKI.

It belongs to the ubiquitin-activating E1 family. UBA5 subfamily. Homodimer; homodimerization is required for ufm1 activation. Interacts (via UIS motif) with ufm1; binds ufm1 via a trans-binding mechanism in which ufm1 interacts with distinct sites in both subunits of the uba5 homodimer. Interacts (via C-terminus) with ufc1.

Its subcellular location is the cytoplasm. It localises to the nucleus. The protein localises to the endoplasmic reticulum membrane. The protein resides in the golgi apparatus. Functionally, E1-like enzyme which specifically catalyzes the first step in ufmylation. Activates ufm1 by first adenylating its C-terminal glycine residue with ATP, and thereafter linking this residue to the side chain of a cysteine residue in E1, yielding a ufm1-E1 thioester and free AMP. Activates ufm1 via a trans-binding mechanism, in which ufm1 interacts with distinct sites in both subunits of the uba5 homodimer. Trans-binding also promotes stabilization of the uba5 homodimer, and enhances ATP-binding. Transfer of ufm1 from uba5 to the E2-like enzyme UFC1 also takes place using a trans mechanism. Ufmylation plays a key role in various processes, such as ribosome recycling, response to DNA damage, interferon response or reticulophagy (also called ER-phagy). In Danio rerio (Zebrafish), this protein is Ubiquitin-like modifier-activating enzyme 5.